The sequence spans 382 residues: Deoxyhypusine synthase (382 aa).

Residues 108–112 (SNLIS), 134–136 (TAG), Glu-140, and Asp-257 contribute to the NAD(+) site. Residue 139–140 (EE) participates in spermidine binding. Asp-262 lines the spermidine pocket. Gly-304 contributes to the NAD(+) binding site. Position 309 (His-309) interacts with spermidine. Residue 329–330 (TG) participates in NAD(+) binding. Residues 335 to 337 (GSD) and 344 to 350 (EAVSWGK) each bind spermidine. Lys-350 acts as the Nucleophile in catalysis. 363–364 (DV) provides a ligand contact to NAD(+).

The protein belongs to the deoxyhypusine synthase family. NAD(+) is required as a cofactor.

It catalyses the reaction [eIF5A protein]-L-lysine + spermidine = [eIF5A protein]-deoxyhypusine + propane-1,3-diamine. It participates in protein modification; eIF5A hypusination. In terms of biological role, catalyzes the NAD-dependent oxidative cleavage of spermidine and the subsequent transfer of the butylamine moiety of spermidine to the epsilon-amino group of a specific lysine residue of the eIF-5A precursor protein to form the intermediate deoxyhypusine residue. This is Deoxyhypusine synthase (DYS1) from Eremothecium gossypii (strain ATCC 10895 / CBS 109.51 / FGSC 9923 / NRRL Y-1056) (Yeast).